We begin with the raw amino-acid sequence, 771 residues long: Solute carrier family 7 member 14 (771 aa).

The next 6 helical transmembrane spans lie at 58 to 78 (LISLGVGSCVGTGMYVVSGLV), 83 to 103 (AGPGVIVSFIIAAVASILSGV), 119 to 141 (AYTYSYVTVGEFVAFFIGWNLIL), 187 to 207 (YPDLLALLIAVIVTIIVALGV), 216 to 236 (VLNVLNLAVWVFIMIAGLFFI), and 251 to 271 (WSGVLQGAATCFYAFIGFDII). N-linked (GlcNAc...) asparagine glycosylation occurs at Asn282. 5 helical membrane passes run 291–311 (ASLVICLTAYVSVSVILTLMV), 336–356 (FVVAIGSVAGLTVSLLGSLFP), 360–380 (VIYAMAGDGLLFRFLAHVSSY), 384–404 (PVVACIVSGFLAALLALLVSL), and 407–427 (LIEMMSIGTLLAYTLVSVCVL). Ser465, Ser468, and Ser488 each carry phosphoserine. 4 helical membrane-spanning segments follow: residues 565-585 (VTICVLLLFILMFIFCSFIIF), 596-616 (WAILLVVLMVLLISTLVFVIL), 628-648 (MAPCLPFVPAFAMLVNIYLML), and 655-675 (WIRFAVWCFVGLLIYFGYGIW). Asn676 carries N-linked (GlcNAc...) asparagine glycosylation. A disordered region spans residues 736 to 771 (DAKANGRTSSKAKSKSKHKQNSEALIANDELDYSPE). Positions 745 to 754 (SKAKSKSKHK) are enriched in basic residues. A phosphoserine mark is found at Ser757 and Ser769.

This sequence belongs to the amino acid-polyamine-organocation (APC) superfamily. Cationic amino acid transporter (CAT) (TC 2.A.3.3) family. Expressed in skin fibroblasts.

Its subcellular location is the lysosome membrane. The enzyme catalyses 4-aminobutanoate(in) = 4-aminobutanoate(out). Functionally, imports 4-aminobutanoate (GABA) into lysosomes. May act as a GABA sensor that regulates mTORC2-dependent INS signaling and gluconeogenesis. The transport mechanism and substrate selectivity remain to be elucidated. The polypeptide is Solute carrier family 7 member 14 (Homo sapiens (Human)).